The chain runs to 91 residues: Ribonuclease P protein component 4 (91 aa).

4 residues coordinate Zn(2+): cysteine 48, cysteine 51, cysteine 71, and cysteine 74.

It belongs to the eukaryotic/archaeal RNase P protein component 4 family. Consists of a catalytic RNA component and at least 4-5 protein subunits. Requires Zn(2+) as cofactor.

It localises to the cytoplasm. The enzyme catalyses Endonucleolytic cleavage of RNA, removing 5'-extranucleotides from tRNA precursor.. Part of ribonuclease P, a protein complex that generates mature tRNA molecules by cleaving their 5'-ends. The sequence is that of Ribonuclease P protein component 4 from Picrophilus torridus (strain ATCC 700027 / DSM 9790 / JCM 10055 / NBRC 100828 / KAW 2/3).